A 308-amino-acid polypeptide reads, in one-letter code: MSKILVFGHQNPDTDAIGAAISFAYLQKELGKETEAVALGTPSEETQYALDYFNIEAPRVVTEAASETNQVMLVDHNEFQQSISDIAEVNILAVVDHHRIANFETADPLYYRAEPVGCTSTIIYKMFKENNVTIPAQIAGMMVSAIISDTLLFKSPTCTQEDIDAAHALADIAEINLEGYGLDLLKAGTNLSDKSAEVLLDLDAKSFPMNGKTVRVAQVNTVDLAEVLDRQAELEAAMAAENAANNYDLFVLIITNILDSDSELLAIGAEQAKIEAAFNVTLVNNRAFLPGVVSRKKQVVPQLTEVFN.

Residues histidine 9, aspartate 13, aspartate 15, aspartate 75, histidine 97, and aspartate 149 each contribute to the Mn(2+) site.

This sequence belongs to the PPase class C family. Requires Mn(2+) as cofactor.

It is found in the cytoplasm. The enzyme catalyses diphosphate + H2O = 2 phosphate + H(+). This chain is Probable manganese-dependent inorganic pyrophosphatase, found in Enterococcus faecalis (strain ATCC 700802 / V583).